The chain runs to 95 residues: Co-chaperonin GroES (95 aa).

This sequence belongs to the GroES chaperonin family. As to quaternary structure, heptamer of 7 subunits arranged in a ring. Interacts with the chaperonin GroEL.

It localises to the cytoplasm. In terms of biological role, together with the chaperonin GroEL, plays an essential role in assisting protein folding. The GroEL-GroES system forms a nano-cage that allows encapsulation of the non-native substrate proteins and provides a physical environment optimized to promote and accelerate protein folding. GroES binds to the apical surface of the GroEL ring, thereby capping the opening of the GroEL channel. This Methylocella silvestris (strain DSM 15510 / CIP 108128 / LMG 27833 / NCIMB 13906 / BL2) protein is Co-chaperonin GroES.